The sequence spans 504 residues: Anaerobic nitric oxide reductase transcription regulator NorR (504 aa).

Position 57 is a 4-aspartylphosphate (Asp-57). The 230-residue stretch at Met-187 to Val-416 folds into the Sigma-54 factor interaction domain. ATP is bound by residues Gly-215–Glu-222 and Ala-278–Glu-287. Positions Trp-479–Lys-498 form a DNA-binding region, H-T-H motif.

It participates in nitrogen metabolism; nitric oxide reduction. Functionally, required for the expression of anaerobic nitric oxide (NO) reductase, acts as a transcriptional activator for at least the norVW operon. Activation also requires sigma-54. This is Anaerobic nitric oxide reductase transcription regulator NorR from Shigella dysenteriae serotype 1 (strain Sd197).